The sequence spans 302 residues: Sulfate adenylyltransferase subunit 2 (302 aa).

Positions 280 to 302 are disordered; sequence RQGRVIDHDSSGSMEKKKREGYF.

The protein belongs to the PAPS reductase family. CysD subfamily. In terms of assembly, heterodimer composed of CysD, the smaller subunit, and CysN.

It catalyses the reaction sulfate + ATP + H(+) = adenosine 5'-phosphosulfate + diphosphate. Its pathway is sulfur metabolism; hydrogen sulfide biosynthesis; sulfite from sulfate: step 1/3. Functionally, with CysN forms the ATP sulfurylase (ATPS) that catalyzes the adenylation of sulfate producing adenosine 5'-phosphosulfate (APS) and diphosphate, the first enzymatic step in sulfur assimilation pathway. APS synthesis involves the formation of a high-energy phosphoric-sulfuric acid anhydride bond driven by GTP hydrolysis by CysN coupled to ATP hydrolysis by CysD. This chain is Sulfate adenylyltransferase subunit 2, found in Shewanella amazonensis (strain ATCC BAA-1098 / SB2B).